The primary structure comprises 73 residues: MKKSLQLSFTFLIISIILSQGMMADAQKKNCPRKIPIKGSYCAPTICLDKCKKQHGTVGSCAEEKGFCNCACK.

Pollen specific.

The protein is Protein BP4C (BP4C) of Brassica napus (Rape).